The primary structure comprises 243 residues: Mitochondrial import inner membrane translocase subunit TIM17-2 (243 aa).

Transmembrane regions (helical) follow at residues 19–36 (IGGAFGMGAVGGSAFHFI), 66–83 (FAVWGGLFSTFDCTMVYL), 90–109 (WNSIIAGAATGGFLSMRQGA), and 115–137 (SAIFGGVLLALIEGAGIMLNKVL). 10 repeat units span residues 149 to 151 (GMQ), 152 to 154 (GMP), 155 to 157 (GMQ), 158 to 160 (GMQ), 161 to 163 (GMP), 164 to 166 (GMP), 167 to 169 (GMQ), 170 to 172 (GMP), 173 to 175 (GMQ), and 176 to 178 (GMQ). Positions 149–178 (GMQGMPGMQGMQGMPGMPGMQGMPGMQGMQ) are 10 X approximate repeats GMQ/P. Residues 166 to 183 (PGMQGMPGMQGMQMGQMQ) are compositionally biased toward low complexity. A disordered region spans residues 166–243 (PGMQGMPGMQ…APPVPSFEFK (78 aa)). The span at 184–198 (SQAQIRSESQNQNTA) shows a compositional bias: polar residues. Positions 211-228 (FDKKKEEVQPGSESKTEV) are enriched in basic and acidic residues.

This sequence belongs to the Tim17/Tim22/Tim23 family. Component of the TIM17:23 complex at least composed of TIM23, TIM17 and TIM50. The complex interacts with the TIM44 component of the PAM complex. Interacts with TIM23-2. As to expression, expressed in roots, flowers, leaves and young cotyledons.

Its subcellular location is the mitochondrion inner membrane. The protein localises to the mitochondrion outer membrane. Its function is as follows. Essential component of the TIM17:23 complex, a complex that mediates the translocation of transit peptide-containing proteins across the mitochondrial inner membrane. Links the inner and outer membranes. The protein is Mitochondrial import inner membrane translocase subunit TIM17-2 (TIM17-2) of Arabidopsis thaliana (Mouse-ear cress).